Consider the following 282-residue polypeptide: Pantothenate synthetase (282 aa).

30–37 (MGYYHAGH) lines the ATP pocket. The active-site Proton donor is the His37. Gln61 contributes to the (R)-pantoate binding site. Gln61 contributes to the beta-alanine binding site. 147 to 150 (GQKD) contacts ATP. Gln153 contributes to the (R)-pantoate binding site. ATP is bound by residues Val176 and 184 to 187 (LSSR).

Belongs to the pantothenate synthetase family. Homodimer.

The protein localises to the cytoplasm. The enzyme catalyses (R)-pantoate + beta-alanine + ATP = (R)-pantothenate + AMP + diphosphate + H(+). Its pathway is cofactor biosynthesis; (R)-pantothenate biosynthesis; (R)-pantothenate from (R)-pantoate and beta-alanine: step 1/1. In terms of biological role, catalyzes the condensation of pantoate with beta-alanine in an ATP-dependent reaction via a pantoyl-adenylate intermediate. This chain is Pantothenate synthetase, found in Desulfovibrio desulfuricans (strain ATCC 27774 / DSM 6949 / MB).